The primary structure comprises 253 residues: Tryptophan synthase alpha chain (253 aa).

Active-site proton acceptor residues include Glu47 and Asp58.

This sequence belongs to the TrpA family. Tetramer of two alpha and two beta chains.

It carries out the reaction (1S,2R)-1-C-(indol-3-yl)glycerol 3-phosphate + L-serine = D-glyceraldehyde 3-phosphate + L-tryptophan + H2O. The protein operates within amino-acid biosynthesis; L-tryptophan biosynthesis; L-tryptophan from chorismate: step 5/5. Its function is as follows. The alpha subunit is responsible for the aldol cleavage of indoleglycerol phosphate to indole and glyceraldehyde 3-phosphate. The polypeptide is Tryptophan synthase alpha chain (Lactococcus lactis subsp. lactis (strain IL1403) (Streptococcus lactis)).